Reading from the N-terminus, the 748-residue chain is Polyribonucleotide nucleotidyltransferase (748 aa).

Residues aspartate 487 and aspartate 493 each coordinate Mg(2+). Residues 554–613 (PSTTTIKIDKDKIRDIIGPGGKVIKEICETSGAKIDISDDGTVSVYASDRDKLKVALDKI) form the KH domain. The S1 motif domain occupies 623 to 691 (GEIFNGTVVK…NKGKAKLTIK (69 aa)). The disordered stretch occupies residues 691-748 (KNADKDKSSNNTKPKTNVNNTKDNSEPEQRRDSSKKRAWNEDNNAETAEVITERKYFN). Low complexity predominate over residues 699–712 (SNNTKPKTNVNNTK). A compositionally biased stretch (basic and acidic residues) spans 713-722 (DNSEPEQRRD).

It belongs to the polyribonucleotide nucleotidyltransferase family. The cofactor is Mg(2+).

It localises to the cytoplasm. The catalysed reaction is RNA(n+1) + phosphate = RNA(n) + a ribonucleoside 5'-diphosphate. Its function is as follows. Involved in mRNA degradation. Catalyzes the phosphorolysis of single-stranded polyribonucleotides processively in the 3'- to 5'-direction. The polypeptide is Polyribonucleotide nucleotidyltransferase (Rickettsia africae (strain ESF-5)).